Consider the following 130-residue polypeptide: Large ribosomal subunit protein eL22 (130 aa).

The interval 1–21 (MPGKTAQKGGRPSGKGKKKKQ) is disordered. The Nuclear localization signal motif lies at 17 to 20 (KKKK).

Belongs to the eukaryotic ribosomal protein eL22 family.

This is Large ribosomal subunit protein eL22 (RPL22) from Tripneustes gratilla (Hawaian sea urchin).